The chain runs to 314 residues: Aspartate carbamoyltransferase catalytic subunit (314 aa).

R63 and T64 together coordinate carbamoyl phosphate. Residue K91 coordinates L-aspartate. The carbamoyl phosphate site is built by R113, H143, and Q146. R176 and R228 together coordinate L-aspartate. The carbamoyl phosphate site is built by A269 and P270.

It belongs to the aspartate/ornithine carbamoyltransferase superfamily. ATCase family. In terms of assembly, heterododecamer (2C3:3R2) of six catalytic PyrB chains organized as two trimers (C3), and six regulatory PyrI chains organized as three dimers (R2).

The catalysed reaction is carbamoyl phosphate + L-aspartate = N-carbamoyl-L-aspartate + phosphate + H(+). It participates in pyrimidine metabolism; UMP biosynthesis via de novo pathway; (S)-dihydroorotate from bicarbonate: step 2/3. Catalyzes the condensation of carbamoyl phosphate and aspartate to form carbamoyl aspartate and inorganic phosphate, the committed step in the de novo pyrimidine nucleotide biosynthesis pathway. The sequence is that of Aspartate carbamoyltransferase catalytic subunit from Cutibacterium acnes (strain DSM 16379 / KPA171202) (Propionibacterium acnes).